A 148-amino-acid polypeptide reads, in one-letter code: MGRGRVEMKRIENKINRQVTFSKRRAGLLKKAHEISILCDAEVSLIVFSHKGKLFEYSSESCMEKVLERYERYSYAEKQLKAPDSHVNAQTNWSMEYSRLKAKIELWERNQRHYLGEDLESISIKELQNLEQQLDTSLKHIPSRKVCK.

One can recognise an MADS-box domain in the interval 1–61; sequence MGRGRVEMKR…GKLFEYSSES (61 aa). One can recognise a K-box; partial domain in the interval 90-148; sequence QTNWSMEYSRLKAKIELWERNQRHYLGEDLESISIKELQNLEQQLDTSLKHIPSRKVCK.

Homodimer capable of binding to CArG-box sequences.

The protein resides in the nucleus. In terms of biological role, probable transcription factor that promotes early floral meristem identity in synergy with APETALA1, FRUITFULL and LEAFY. Is required subsequently for the transition of an inflorescence meristem into a floral meristem. Seems to be partially redundant to the function of APETALA1. This is Truncated transcription factor CAULIFLOWER C (CAL-C) from Brassica oleracea var. botrytis (Cauliflower).